The following is a 2368-amino-acid chain: Highly reducing polyketide synthase cla2 (2368 aa).

One can recognise a Ketosynthase family 3 (KS3) domain in the interval Gln-10–Ala-434. Residues Cys-182, His-317, and His-357 each act as for beta-ketoacyl synthase activity in the active site. The interval Phe-548–Leu-877 is malonyl-CoA:ACP transacylase (MAT) domain. The active-site For malonyltransferase activity is the Ser-638. The interval His-936 to Lys-1071 is N-terminal hotdog fold. The dehydratase (DH) domain stretch occupies residues His-936–Thr-1175. The PKS/mFAS DH domain maps to His-936–Ala-1255. His-968 (proton acceptor; for dehydratase activity) is an active-site residue. The tract at residues Pro-1099–Ala-1255 is C-terminal hotdog fold. The active-site Proton donor; for dehydratase activity is the Asp-1165. The interval Gly-1655–Leu-1967 is enoylreductase (ER) domain. A catalytic ketoreductase (KRc) domain region spans residues Ala-1991–Arg-2170. A Carrier domain is found at Gln-2283 to Ser-2360. Ser-2320 bears the O-(pantetheine 4'-phosphoryl)serine mark.

It functions in the pathway secondary metabolite biosynthesis. Its function is as follows. Highly reducing polyketide synthase; part of the gene cluster that mediates the biosynthesis of cladosporin, a tricyclic octaketide that acts as an antimalarial agent though inhibition of the Plasmodium falciparum lysyl-tRNA synthetase. The highly reducing polyketide synthase cla2 is responsible for biosynthesis up to the pentaketide stage, including of the tetrahydropyran (THP) ring, whereas the three subsequent ketide extensions with no reduction are catalyzed by the non-reducing polyketide synthase cla3. The polypeptide is Highly reducing polyketide synthase cla2 (Cladosporium cladosporioides).